A 567-amino-acid polypeptide reads, in one-letter code: Zinc finger protein 512 (567 aa).

The segment at 1-34 (MSSRLGAVPATPGPTPFKQQRSTRIVGAKNSRTQ) is disordered. Residues lysine 18 and lysine 84 each participate in a glycyl lysine isopeptide (Lys-Gly) (interchain with G-Cter in SUMO2) cross-link. The tract at residues 87 to 148 (AASHVEGPGG…QTRRIRKEPP (62 aa)) is disordered. Positions 119–130 (KKHKLYGRKQRP) are enriched in basic residues. A C2H2-type 1 zinc finger spans residues 197–220 (FTCHHCGKQLRSLAGMKYHVMANH). A Glycyl lysine isopeptide (Lys-Gly) (interchain with G-Cter in SUMO2) cross-link involves residue lysine 227. Residues 287 to 310 (LKCHHCGKPYRSKAGLAYHLRSEH) form a C2H2-type 2 zinc finger. Lysine 333 participates in a covalent cross-link: Glycyl lysine isopeptide (Lys-Gly) (interchain with G-Cter in SUMO2). A C2H2-type 3; atypical zinc finger spans residues 406 to 430 (IQCPNQGCEAVYSSVSGLKAHLGSC). The segment at 440-463 (YKCLLCQKEFVSESGVKYHINSVH) adopts a C2H2-type 3 zinc-finger fold. Over residues 485–494 (KQRQQEEEKR) the composition is skewed to basic and acidic residues. Residues 485-567 (KQRQQEEEKR…PKTNHKRGKK (83 aa)) form a disordered region. Basic residues predominate over residues 495–508 (RQQHRSRRSLRRRQ). Residues 523–544 (VGKDQRRNHEELLVATSRKEPE) are compositionally biased toward basic and acidic residues. The segment covering 556 to 567 (RSPKTNHKRGKK) has biased composition (basic residues).

It belongs to the krueppel C2H2-type zinc-finger protein family.

The protein localises to the nucleus. In terms of biological role, may be involved in transcriptional regulation. The chain is Zinc finger protein 512 (ZNF512) from Bos taurus (Bovine).